We begin with the raw amino-acid sequence, 322 residues long: Porphobilinogen deaminase (322 aa).

Residue Cys254 is modified to S-(dipyrrolylmethanemethyl)cysteine.

Belongs to the HMBS family. Monomer. Requires dipyrromethane as cofactor.

The enzyme catalyses 4 porphobilinogen + H2O = hydroxymethylbilane + 4 NH4(+). It functions in the pathway porphyrin-containing compound metabolism; protoporphyrin-IX biosynthesis; coproporphyrinogen-III from 5-aminolevulinate: step 2/4. Tetrapolymerization of the monopyrrole PBG into the hydroxymethylbilane pre-uroporphyrinogen in several discrete steps. In Methylococcus capsulatus (strain ATCC 33009 / NCIMB 11132 / Bath), this protein is Porphobilinogen deaminase.